Consider the following 1852-residue polypeptide: Chitin synthase csmA (1852 aa).

Positions 1–20 (MVGTLPAGHTPSHVQSSLPS) are disordered. The Myosin motor domain maps to 1 to 787 (MVGTLPAGHT…CWADLAKVGE (787 aa)). An N-linked (GlcNAc...) asparagine glycan is attached at Asn-58. An ATP-binding site is contributed by 102-109 (GESGAGKT). The interval 599 to 646 (SSKPLRMPSMARRKTSPASRLTFDATPAEDPYETESQTGSSAKNSSAK) is disordered. An N-linked (GlcNAc...) asparagine glycan is attached at Asn-642. The segment at 667 to 691 (LDIVNKCLTSGNLNPYFVFCLKPND) is actin-binding. Asn-840 is a glycosylation site (N-linked (GlcNAc...) asparagine). 2 helical membrane-spanning segments follow: residues 895–915 (WMAIVWLLTFYIPTPAIRYIG) and 930–950 (FAINLLIWLACAIAVFIIVGF). A Cytochrome b5 heme-binding domain is found at 958 to 1017 (QHVYSPAELSSHDGKDGHSSYTSIRGLVLDLGEFMDSHYPGIVPDSALKKYAGVDSTALF). Residues Asn-1044 and Asn-1195 are each glycosylated (N-linked (GlcNAc...) asparagine). Residues 1205–1225 (FILAISVLICSVIVFKFFAAL) form a helical membrane-spanning segment. N-linked (GlcNAc...) asparagine glycosylation is found at Asn-1428, Asn-1462, and Asn-1568. The next 3 membrane-spanning stretches (helical) occupy residues 1600–1620 (ISTIIMPVTVAYIVYLIVWLV), 1626–1646 (IPWTSFLLLAAIYGLQAIIFI), and 1653–1673 (MIGWMIIYILAIPVYSLALPL). The DEK-C domain maps to 1794–1849 (LPSDDAILSEIRDILRTADLMTVTKKNIKQELERRFGVNLDAKRPYINSATEAVLS).

This sequence in the N-terminal section; belongs to the TRAFAC class myosin-kinesin ATPase superfamily. Myosin family. In the C-terminal section; belongs to the chitin synthase family. Class V subfamily. In terms of assembly, binds F-actin via its N-terminal myosin motor-like domain (MMD). Interacts with kibesin kinA.

It is found in the cell membrane. Its subcellular location is the cell septum. The protein localises to the cell tip. It catalyses the reaction [(1-&gt;4)-N-acetyl-beta-D-glucosaminyl](n) + UDP-N-acetyl-alpha-D-glucosamine = [(1-&gt;4)-N-acetyl-beta-D-glucosaminyl](n+1) + UDP + H(+). Its function is as follows. Polymerizes chitin, a structural polymer of the cell wall and septum, by transferring the sugar moiety of UDP-GlcNAc to the non-reducing end of the growing chitin polymer. Plays an important role in polarized hyphal cell wall synthesis and maintenance of cell wall integrity. Its role in growth and morphogenesis is particularly important under low osmotic conditions. In Emericella nidulans (Aspergillus nidulans), this protein is Chitin synthase csmA.